The primary structure comprises 197 residues: Holliday junction branch migration complex subunit RuvA (197 aa).

Residues 1–63 (MIALLNGQLI…EDALLLFGFL (63 aa)) form a domain I region. The domain II stretch occupies residues 64–142 (TETEKDLFGL…PVQAVPGNAP (79 aa)). Residues 142 to 146 (PLPAE) are flexible linker. The segment at 147–197 (TAGDLREDALSALVNLGYKENLSRKALDGIDTAPDAPLEDILKQALKLLMR) is domain III.

This sequence belongs to the RuvA family. Homotetramer. Forms an RuvA(8)-RuvB(12)-Holliday junction (HJ) complex. HJ DNA is sandwiched between 2 RuvA tetramers; dsDNA enters through RuvA and exits via RuvB. An RuvB hexamer assembles on each DNA strand where it exits the tetramer. Each RuvB hexamer is contacted by two RuvA subunits (via domain III) on 2 adjacent RuvB subunits; this complex drives branch migration. In the full resolvosome a probable DNA-RuvA(4)-RuvB(12)-RuvC(2) complex forms which resolves the HJ.

It is found in the cytoplasm. The RuvA-RuvB-RuvC complex processes Holliday junction (HJ) DNA during genetic recombination and DNA repair, while the RuvA-RuvB complex plays an important role in the rescue of blocked DNA replication forks via replication fork reversal (RFR). RuvA specifically binds to HJ cruciform DNA, conferring on it an open structure. The RuvB hexamer acts as an ATP-dependent pump, pulling dsDNA into and through the RuvAB complex. HJ branch migration allows RuvC to scan DNA until it finds its consensus sequence, where it cleaves and resolves the cruciform DNA. The polypeptide is Holliday junction branch migration complex subunit RuvA (Syntrophotalea carbinolica (strain DSM 2380 / NBRC 103641 / GraBd1) (Pelobacter carbinolicus)).